Consider the following 66-residue polypeptide: Large ribosomal subunit protein bL35 (66 aa).

The protein belongs to the bacterial ribosomal protein bL35 family.

The polypeptide is Large ribosomal subunit protein bL35 (Afipia carboxidovorans (strain ATCC 49405 / DSM 1227 / KCTC 32145 / OM5) (Oligotropha carboxidovorans)).